Reading from the N-terminus, the 213-residue chain is Orotidine 5'-phosphate decarboxylase (213 aa).

Residues Asp6, Lys25, Asp52 to Thr61, Ser109, Pro158 to Gly168, Gly181, and Arg182 contribute to the substrate site. The Proton donor role is filled by Lys54.

This sequence belongs to the OMP decarboxylase family. Type 1 subfamily. As to quaternary structure, homodimer.

It catalyses the reaction orotidine 5'-phosphate + H(+) = UMP + CO2. It participates in pyrimidine metabolism; UMP biosynthesis via de novo pathway; UMP from orotate: step 2/2. Catalyzes the decarboxylation of orotidine 5'-monophosphate (OMP) to uridine 5'-monophosphate (UMP). This Sulfurisphaera tokodaii (strain DSM 16993 / JCM 10545 / NBRC 100140 / 7) (Sulfolobus tokodaii) protein is Orotidine 5'-phosphate decarboxylase.